Reading from the N-terminus, the 168-residue chain is Phosphopantetheine adenylyltransferase (168 aa).

Threonine 14 lines the substrate pocket. ATP is bound by residues 14-15 (TF) and histidine 22. The substrate site is built by lysine 46, leucine 78, and arginine 92. Residues 93-95 (GLR), glutamate 103, and 128-134 (YSFISSS) each bind ATP.

This sequence belongs to the bacterial CoaD family. In terms of assembly, homohexamer. Mg(2+) is required as a cofactor.

It is found in the cytoplasm. The enzyme catalyses (R)-4'-phosphopantetheine + ATP + H(+) = 3'-dephospho-CoA + diphosphate. The protein operates within cofactor biosynthesis; coenzyme A biosynthesis; CoA from (R)-pantothenate: step 4/5. In terms of biological role, reversibly transfers an adenylyl group from ATP to 4'-phosphopantetheine, yielding dephospho-CoA (dPCoA) and pyrophosphate. In Xanthomonas oryzae pv. oryzae (strain MAFF 311018), this protein is Phosphopantetheine adenylyltransferase.